We begin with the raw amino-acid sequence, 123 residues long: MPTINQLIAQPRKIQRSRNKVPALDACPQKRGVCTRVYTTTPKKPNSALRKVAKVRLTNGFEVIGYIPGEGHNLQEHSVVMIRGGRVKDLPGVRYHILRGVLDTQGVKNRKQRRSKYGAKRPK.

D89 is subject to 3-methylthioaspartic acid.

It belongs to the universal ribosomal protein uS12 family. Part of the 30S ribosomal subunit. Contacts proteins S8 and S17. May interact with IF1 in the 30S initiation complex.

With S4 and S5 plays an important role in translational accuracy. In terms of biological role, interacts with and stabilizes bases of the 16S rRNA that are involved in tRNA selection in the A site and with the mRNA backbone. Located at the interface of the 30S and 50S subunits, it traverses the body of the 30S subunit contacting proteins on the other side and probably holding the rRNA structure together. The combined cluster of proteins S8, S12 and S17 appears to hold together the shoulder and platform of the 30S subunit. This is Small ribosomal subunit protein uS12 from Methylobacterium radiotolerans (strain ATCC 27329 / DSM 1819 / JCM 2831 / NBRC 15690 / NCIMB 10815 / 0-1).